A 274-amino-acid chain; its full sequence is 3-methyl-2-oxobutanoate hydroxymethyltransferase (274 aa).

Positions 50 and 89 each coordinate Mg(2+). 3-methyl-2-oxobutanoate-binding positions include 50–51 (DS), Asp-89, and Lys-119. Glu-121 provides a ligand contact to Mg(2+). The Proton acceptor role is filled by Glu-188.

It belongs to the PanB family. As to quaternary structure, homodecamer; pentamer of dimers. Mg(2+) serves as cofactor.

It is found in the cytoplasm. The catalysed reaction is 3-methyl-2-oxobutanoate + (6R)-5,10-methylene-5,6,7,8-tetrahydrofolate + H2O = 2-dehydropantoate + (6S)-5,6,7,8-tetrahydrofolate. It participates in cofactor biosynthesis; (R)-pantothenate biosynthesis; (R)-pantoate from 3-methyl-2-oxobutanoate: step 1/2. Functionally, catalyzes the reversible reaction in which hydroxymethyl group from 5,10-methylenetetrahydrofolate is transferred onto alpha-ketoisovalerate to form ketopantoate. This is 3-methyl-2-oxobutanoate hydroxymethyltransferase from Methylorubrum populi (strain ATCC BAA-705 / NCIMB 13946 / BJ001) (Methylobacterium populi).